The chain runs to 532 residues: Intercellular adhesion molecule 1 (532 aa).

Positions 1–27 (MAPSSPRPALPALLVLLGALFPGPGNA) are cleaved as a signal peptide. The Extracellular portion of the chain corresponds to 28–480 (QTSVSPPKVI…TVNVLSPRYE (453 aa)). Ig-like C2-type domains follow at residues 41-103 (GGSV…QSTA) and 128-193 (GKDL…LDLR). 3 disulfide bridges follow: Cys-48/Cys-92, Cys-52/Cys-96, and Cys-135/Cys-186. The Cell attachment site; atypical motif lies at 152–154 (RGE). N-linked (GlcNAc...) asparagine glycans are attached at residues Asn-202 and Asn-267. Ig-like C2-type domains are found at residues 230–297 (DTQG…LGTQ) and 325–378 (GTEV…LEVA). Cystine bridges form between Cys-237-Cys-290 and Cys-332-Cys-371. N-linked (GlcNAc...) asparagine glycans are attached at residues Asn-385 and Asn-406. 3 cysteine pairs are disulfide-bonded: Cys-403/Cys-419, Cys-419/Cys-457, and Cys-431/Cys-457. An Ig-like C2-type 5 domain is found at 412 to 464 (NSQQTPMCQAWGNPLPELKCLKDGTFPLPVGESVTVTRDLEGTYLCRARSTQG). Residues 481 to 503 (FVIIAVVAAAVIMGTAGLSTYLY) form a helical membrane-spanning segment. The Cytoplasmic portion of the chain corresponds to 504–532 (NRQRKIRKYRLQQAQKGTPMKPNTQATPP). Thr-521 and Thr-530 each carry phosphothreonine.

This sequence belongs to the immunoglobulin superfamily. ICAM family. Homodimer. Interacts with MUC1 and promotes cell aggregation in epithelial cells. Interacts with ARHGEF26/SGEF. Interacts (on T cell side) with CD81, CD247 and CD9 at immunological synapses between antigen-presenting cells and T cells. In terms of processing, monoubiquitinated, which is promoted by MARCH9 and leads to endocytosis.

It localises to the membrane. Its function is as follows. ICAM proteins are ligands for the leukocyte adhesion protein LFA-1 (integrin alpha-L/beta-2). During leukocyte trans-endothelial migration, ICAM1 engagement promotes the assembly of endothelial apical cups through ARHGEF26/SGEF and RHOG activation. The protein is Intercellular adhesion molecule 1 (ICAM1) of Gorilla gorilla gorilla (Western lowland gorilla).